Reading from the N-terminus, the 474-residue chain is 6-phospho-beta-galactosidase (474 aa).

D-galactose 6-phosphate-binding residues include Gln19, His116, Asn159, Glu160, and Asn297. The Proton donor role is filled by Glu160. Catalysis depends on Glu375, which acts as the Nucleophile. 4 residues coordinate D-galactose 6-phosphate: Ser433, Trp434, Lys440, and Tyr442.

The protein belongs to the glycosyl hydrolase 1 family.

The catalysed reaction is a 6-phospho-beta-D-galactoside + H2O = D-galactose 6-phosphate + an alcohol. Its pathway is carbohydrate metabolism; lactose degradation; D-galactose 6-phosphate and beta-D-glucose from lactose 6-phosphate: step 1/1. The protein is 6-phospho-beta-galactosidase of Lacticaseibacillus casei (Lactobacillus casei).